The sequence spans 57 residues: uncharacterized protein (57 aa).

The disordered stretch occupies residues 1–57 (MITPIGKNSNSNSNSNSNSNSNSNSNSNSNSNSNSNSNSNSNSNSNSNSNSNSNSNN). Residues 8-57 (NSNSNSNSNSNSNSNSNSNSNSNSNSNSNSNSNSNSNSNSNSNSNSNSNN) show a composition bias toward low complexity.

This is an uncharacterized protein from Dictyostelium discoideum (Social amoeba).